The sequence spans 392 residues: Stilbene synthase 5 (392 aa).

55 to 58 (KFNR) contacts substrate. Residue Cys164 is part of the active site. Substrate-binding positions include Leu267 and 305–307 (GGP).

The protein belongs to the thiolase-like superfamily. Chalcone/stilbene synthases family. Homodimer.

Its subcellular location is the cytoplasm. It catalyses the reaction 4-coumaroyl-CoA + 3 malonyl-CoA + 3 H(+) = trans-resveratrol + 4 CO2 + 4 CoA. It functions in the pathway phytoalexin biosynthesis; 3,4',5-trihydroxystilbene biosynthesis; 3,4',5-trihydroxystilbene from trans-4-coumarate: step 2/2. Its function is as follows. Mediates resistance to pathogens which are sensitive to stilbenes. The sequence is that of Stilbene synthase 5 from Vitis vinifera (Grape).